The sequence spans 480 residues: Proline--tRNA ligase (480 aa).

The protein belongs to the class-II aminoacyl-tRNA synthetase family. ProS type 3 subfamily. Homodimer.

The protein localises to the cytoplasm. It carries out the reaction tRNA(Pro) + L-proline + ATP = L-prolyl-tRNA(Pro) + AMP + diphosphate. Functionally, catalyzes the attachment of proline to tRNA(Pro) in a two-step reaction: proline is first activated by ATP to form Pro-AMP and then transferred to the acceptor end of tRNA(Pro). This is Proline--tRNA ligase from Roseiflexus castenholzii (strain DSM 13941 / HLO8).